The primary structure comprises 259 residues: Ribosomal RNA small subunit methyltransferase J (259 aa).

Residues 109–110 (RD), 125–126 (ER), 161–162 (SS), and Asp-179 each bind S-adenosyl-L-methionine.

This sequence belongs to the methyltransferase superfamily. RsmJ family.

The protein localises to the cytoplasm. It carries out the reaction guanosine(1516) in 16S rRNA + S-adenosyl-L-methionine = N(2)-methylguanosine(1516) in 16S rRNA + S-adenosyl-L-homocysteine + H(+). Specifically methylates the guanosine in position 1516 of 16S rRNA. In Shewanella putrefaciens (strain CN-32 / ATCC BAA-453), this protein is Ribosomal RNA small subunit methyltransferase J.